The primary structure comprises 120 residues: NAD(P)H-quinone oxidoreductase subunit 3, chloroplastic (120 aa).

The next 3 membrane-spanning stretches (helical) occupy residues 10–30 (FWAF…TSSL), 64–84 (MFAL…PWAM), and 89–109 (LGVL…IGLV).

Belongs to the complex I subunit 3 family. In terms of assembly, NDH is composed of at least 16 different subunits, 5 of which are encoded in the nucleus.

It localises to the plastid. Its subcellular location is the chloroplast thylakoid membrane. It catalyses the reaction a plastoquinone + NADH + (n+1) H(+)(in) = a plastoquinol + NAD(+) + n H(+)(out). The enzyme catalyses a plastoquinone + NADPH + (n+1) H(+)(in) = a plastoquinol + NADP(+) + n H(+)(out). NDH shuttles electrons from NAD(P)H:plastoquinone, via FMN and iron-sulfur (Fe-S) centers, to quinones in the photosynthetic chain and possibly in a chloroplast respiratory chain. The immediate electron acceptor for the enzyme in this species is believed to be plastoquinone. Couples the redox reaction to proton translocation, and thus conserves the redox energy in a proton gradient. In Zygnema circumcarinatum (Green alga), this protein is NAD(P)H-quinone oxidoreductase subunit 3, chloroplastic.